Here is a 199-residue protein sequence, read N- to C-terminus: Nuclear transcription factor Y subunit C-2 (199 aa).

It belongs to the NFYC/HAP5 subunit family. Heterotrimeric transcription factor composed of three components, NF-YA, NF-YB and NF-YC. NF-YB and NF-YC must interact and dimerize for NF-YA association and DNA binding. Interacts with HTT1 in both cytoplasm and nucleus. Ubiquitous.

It is found in the nucleus. It localises to the cytoplasm. Stimulates the transcription of various genes by recognizing and binding to a CCAAT motif in promoters. The polypeptide is Nuclear transcription factor Y subunit C-2 (NFYC2) (Arabidopsis thaliana (Mouse-ear cress)).